A 193-amino-acid polypeptide reads, in one-letter code: Large ribosomal subunit protein uL5 (193 aa).

Belongs to the universal ribosomal protein uL5 family. Part of the 50S ribosomal subunit; part of the 5S rRNA/L5/L18/L25 subcomplex. Contacts the 5S rRNA and the P site tRNA. Forms a bridge to the 30S subunit in the 70S ribosome.

This is one of the proteins that bind and probably mediate the attachment of the 5S RNA into the large ribosomal subunit, where it forms part of the central protuberance. In the 70S ribosome it contacts protein S13 of the 30S subunit (bridge B1b), connecting the 2 subunits; this bridge is implicated in subunit movement. Contacts the P site tRNA; the 5S rRNA and some of its associated proteins might help stabilize positioning of ribosome-bound tRNAs. The chain is Large ribosomal subunit protein uL5 from Renibacterium salmoninarum (strain ATCC 33209 / DSM 20767 / JCM 11484 / NBRC 15589 / NCIMB 2235).